The sequence spans 305 residues: MKSDSSTSAAPLRGLGGPLRSSEPVRAVPARAPAVDLLEEAADLLVVHLDFRAALETCERAWQSLANHAVAEEPAGTSLEVKCSLCVVGIQALAEMDRWQEVLSWVLQYYQVPEKLPPKVLELCILLYSKMQEPGAVLDVVGAWLQDPANQNLPEYGALAEFHVQRVLLPLGCLSEAEELVVGSAAFGEERRLDVLQAIHTARQQQKQEHSGSEEAQKPNLEGSVSHKFLSLPMLVRQLWDSAVSHFFSLPFKKSLLAALILCLLVVRFDPASPSSLHFLYKLAQLFRWIRKAAFSRLYQLRIRD.

Residues 1 to 20 (MKSDSSTSAAPLRGLGGPLR) form a disordered region. Over 1 to 246 (MKSDSSTSAA…RQLWDSAVSH (246 aa)) the chain is Cytoplasmic. Residues 247–267 (FFSLPFKKSLLAALILCLLVV) form a helical; Signal-anchor for type II membrane protein membrane-spanning segment. Over 268–305 (RFDPASPSSLHFLYKLAQLFRWIRKAAFSRLYQLRIRD) the chain is Peroxisomal matrix.

This sequence belongs to the peroxin-26 family. Interacts (via its cytoplasmic domain) with PEX6; interaction is direct and is ATP-dependent. Interacts with PEX1; interaction is indirect and is mediated via interaction with PEX6. As to expression, widely expressed. Highly expressed in kidney, liver, brain and skeletal muscles. Expressed at intermediate level in pancreas, placenta and heart. Weakly expressed in lung.

It localises to the peroxisome membrane. Peroxisomal docking factor that anchors PEX1 and PEX6 to peroxisome membranes. PEX26 is therefore required for the formation of the PEX1-PEX6 AAA ATPase complex, a complex that mediates the extraction of the PEX5 receptor from peroxisomal membrane. This Homo sapiens (Human) protein is Peroxisome assembly protein 26.